The sequence spans 121 residues: Insulin-like peptide 01 (121 aa).

The signal sequence occupies residues 1 to 24; it reads MDSFTRASLITFLILLTLTSLVFS. Residues 25-45 constitute a propeptide that is removed on maturation; the sequence is NGCMMRGGCFKTSEDAHRLIM. Disulfide bonds link Cys52–Cys107, Cys64–Cys120, and Cys106–Cys111. The propeptide at 69–97 is c peptide; the sequence is RRRKRDLRRKLGIVMDRKESHKFLRRRKR.

Belongs to the insulin family.

The protein localises to the secreted. In terms of biological role, insulin decreases blood glucose concentration. May have evolved to activate insulin receptors (INSR) in vertebrates. Molecular docking studies reveals unique interaction with the human insulin receptor. In vivo, insulin-like peptide injection reduces blood glucose levels in two models of zebrafish diabetes (streptozotocin- and glucose-induced). Also shorter swimming distance of zebrafish larvae, an effect which is not observed with human insulin. The protein is Insulin-like peptide 01 of Exaiptasia diaphana (Tropical sea anemone).